The sequence spans 674 residues: MTDQEEAKLILDKLNEKIRYHDLLYYTQDSPEISDAEYDDLCHQRSIILEKFPSLNSYYQDYIGGDPDSRFSKVKHNERMLSLDNAFNKQDVEKFMVRTRKLLDMKENESLCFSCELKIDGLSFSIIYKNGKLFQASTRGNGYFGENITNNVKTIENLPHTIQNAPDFLEVRGEVYIDRNDFIQLNNEGKNFANPRNAAAGSIRQLDPTITAQRKLKYCMYTIVNSNCLTQTESLNLLNSWGFCTNEHTISTDNFEEAINFYNKMYNNRSNISYDIDGIIYKINNIKLQHILGTTSKSPRWAIAYKFPAIEGKTKLNKISIQVGRTGVLTPIAELAPINIGGVVITRASLHNKSEIERKDIREGDYVIVKRAGDVIPQVVDVDKSLRTVELAEFNFPTACPACGSTVYQAQQEVSIYCMGGLFCHNQILEKIRHFVSKDAFNIIGLGKKQLLFFYEYGLITNIIDIFTLEEKINNKNIQLSSFNGWGEKSINNLLSAINNSKVINLENFIFSLGIRFVGKHIAKILANHFISYKNWYTEMLKLAQDVNYTINIQQVGLKTINSLRTFFIEQHNLNMINNLVEHLTIIDAQSNSYVSLIHGKTIVFTGELSSMSRSEAKLKSETAGAKVSSSLSKNTDFLIIGNNPGSKYKKAQSLNIQILSEDIWLQYIQPNKV.

NAD(+)-binding positions include 35-39 (DAEYD), 82-83 (SL), and Glu-116. Catalysis depends on Lys-118, which acts as the N6-AMP-lysine intermediate. Positions 139, 174, 282, and 306 each coordinate NAD(+). 4 residues coordinate Zn(2+): Cys-400, Cys-403, Cys-418, and Cys-424. One can recognise a BRCT domain in the interval 593–674 (SYVSLIHGKT…WLQYIQPNKV (82 aa)).

This sequence belongs to the NAD-dependent DNA ligase family. LigA subfamily. Requires Mg(2+) as cofactor. Mn(2+) serves as cofactor.

The enzyme catalyses NAD(+) + (deoxyribonucleotide)n-3'-hydroxyl + 5'-phospho-(deoxyribonucleotide)m = (deoxyribonucleotide)n+m + AMP + beta-nicotinamide D-nucleotide.. In terms of biological role, DNA ligase that catalyzes the formation of phosphodiester linkages between 5'-phosphoryl and 3'-hydroxyl groups in double-stranded DNA using NAD as a coenzyme and as the energy source for the reaction. It is essential for DNA replication and repair of damaged DNA. The chain is DNA ligase from Ehrlichia ruminantium (strain Welgevonden).